The primary structure comprises 187 residues: Ribosome-recycling factor (187 aa).

This sequence belongs to the RRF family.

The protein localises to the cytoplasm. In terms of biological role, responsible for the release of ribosomes from messenger RNA at the termination of protein biosynthesis. May increase the efficiency of translation by recycling ribosomes from one round of translation to another. In Lactiplantibacillus plantarum (strain ATCC BAA-793 / NCIMB 8826 / WCFS1) (Lactobacillus plantarum), this protein is Ribosome-recycling factor.